Consider the following 308-residue polypeptide: Neurexophilin-4 (308 aa).

An N-terminal signal peptide occupies residues 1–23; the sequence is MRLLPEWFLLLFGPWLLRKAVSA. The tract at residues 24-84 is II; that stretch reads QIPESGRPQY…GALARAGAAG (61 aa). Low complexity predominate over residues 40–51; sequence AAGAGAPGQQLP. A disordered region spans residues 40-59; that stretch reads AAGAGAPGQQLPEPRSSDGL. Residues asparagine 72, asparagine 133, asparagine 143, and asparagine 149 are each glycosylated (N-linked (GlcNAc...) asparagine). The interval 85–163 is III; the sequence is ALPAQRTKRK…IVPPSKRVEF (79 aa). Residues 164–224 are IV (linker domain); it reads GGVWLPGPVP…PLGGALGVPG (61 aa). The tract at residues 225–308 is v (Cys-rich); the sequence is AKESRAFNCH…NFQSEHPYFG (84 aa).

The protein belongs to the neurexophilin family. Post-translationally, may be proteolytically processed at the boundary between the N-terminal non-conserved and the central conserved domain in neuron-like cells. Expressed in brain, spleen, and testis.

The protein localises to the secreted. May be signaling molecules that resemble neuropeptides and that act by binding to alpha-neurexins and possibly other receptors. The protein is Neurexophilin-4 (NXPH4) of Homo sapiens (Human).